We begin with the raw amino-acid sequence, 516 residues long: Thiosulfate sulfurtransferase/rhodanese-like domain-containing protein 2 (516 aa).

Ser-269 is subject to Phosphoserine. Positions 301-396 (EQSDTILLDC…YLEEFPDGFY (96 aa)) constitute a Rhodanese domain. The Cysteine persulfide intermediate role is filled by Cys-355. The tract at residues 490–516 (RELLQHVRQPVSPEPGPDAEEDGPVLV) is disordered. Over residues 506–516 (PDAEEDGPVLV) the composition is skewed to acidic residues.

The chain is Thiosulfate sulfurtransferase/rhodanese-like domain-containing protein 2 (TSTD2) from Pongo abelii (Sumatran orangutan).